The sequence spans 617 residues: tRNA uridine 5-carboxymethylaminomethyl modification enzyme MnmG (617 aa).

FAD is bound by residues 9–14 (GAGHAG), Val-121, and Thr-176. 269–283 (GPRYCPSIEDKFVRF) contacts NAD(+). Position 366 (Gln-366) interacts with FAD.

Belongs to the MnmG family. In terms of assembly, homodimer. Heterotetramer of two MnmE and two MnmG subunits. Requires FAD as cofactor.

It is found in the cytoplasm. Its function is as follows. NAD-binding protein involved in the addition of a carboxymethylaminomethyl (cmnm) group at the wobble position (U34) of certain tRNAs, forming tRNA-cmnm(5)s(2)U34. The sequence is that of tRNA uridine 5-carboxymethylaminomethyl modification enzyme MnmG from Acholeplasma laidlawii (strain PG-8A).